The primary structure comprises 366 residues: RISC-loading complex subunit TARBP2 (366 aa).

Sufficient for interaction with PRKRA regions lie at residues Met22 to Leu105, Ser152 to Asp234, and Leu287 to Lys366. Positions Thr30–Gly97 constitute a DRBM 1 domain. Ser152 carries the phosphoserine modification. 2 consecutive DRBM domains span residues Asn159–Thr227 and Ala293–Ile361. The interval Val228–Lys366 is sufficient for interaction with DICER1.

It belongs to the TARBP2 family. As to quaternary structure, self-associates. Component of the RISC loading complex (RLC), or micro-RNA (miRNA) loading complex (miRLC), which is composed of DICER1, AGO2 and TARBP2. Note that the trimeric RLC/miRLC is also referred to as RISC. Interacts with EIF2AK2/PKR and inhibits its protein kinase activity. Interacts with DHX9 and PRKRA. Interacts with DICER1, AGO2, MOV10, EIF6 and RPL7A (60S ribosome subunit); they form a large RNA-induced silencing complex (RISC). Interacts with IRF7; this interaction prevents IRF7 phosphorylation and activation. (Microbial infection) Interacts with FTSJ3; forms a complex with FTSJ3 and HIV-1 TAR RNA. In terms of assembly, (Microbial infection) Interacts with ebolavirus VP30; this interaction, which occurs only in the presence of siRNA, prevents TARBP2 binding to DICER1 and thus allows the virus to counteract host RNA silencing. As to quaternary structure, (Microbial infection) Interacts with ebolavirus VP35; this interaction prevents TARBP2 binding to DICER1 and thus allows the virus to counteract host RNA silencing.

The protein resides in the cytoplasm. The protein localises to the perinuclear region. Its subcellular location is the nucleus. Functionally, required for formation of the RNA induced silencing complex (RISC). Component of the RISC loading complex (RLC), also known as the micro-RNA (miRNA) loading complex (miRLC), which is composed of DICER1, AGO2 and TARBP2. Within the RLC/miRLC, DICER1 and TARBP2 are required to process precursor miRNAs (pre-miRNAs) to mature miRNAs and then load them onto AGO2. AGO2 bound to the mature miRNA constitutes the minimal RISC and may subsequently dissociate from DICER1 and TARBP2. May also play a role in the production of short interfering RNAs (siRNAs) from double-stranded RNA (dsRNA) by DICER1. Binds in vitro to the PRM1 3'-UTR. Seems to act as a repressor of translation. For some pre-miRNA substrates, may also alter the choice of cleavage site by DICER1. Negatively regulates IRF7-mediated IFN-beta signaling triggered by viral infection by inhibiting the phosphorylation of IRF7 and promoting its 'Lys'-48-linked ubiquitination and degradation. Its function is as follows. (Microbial infection) Binds to the HIV-1 TAR RNA which is located in the long terminal repeat (LTR) of HIV-1, and stimulates translation of TAR-containing RNAs. This is achieved in part at least by binding to and inhibiting EIF2AK2/PKR, thereby reducing phosphorylation and inhibition of EIF2S1/eIF-2-alpha. May also promote translation of TAR-containing RNAs independently of EIF2AK2/PKR. Mediates recruitment of FTSJ3 methyltransferase to HIV-1 RNA, leading to 2'-O-methylation of the viral genome, allowing HIV-1 to escape the innate immune system. This chain is RISC-loading complex subunit TARBP2, found in Homo sapiens (Human).